The chain runs to 185 residues: Methanol dehydrogenase activator (185 aa).

The protein belongs to the Nudix hydrolase family. In terms of assembly, homodimer. Mg(2+) serves as cofactor.

In terms of biological role, involved in the activation of the NAD-dependent methanol dehydrogenase (MDH). MDH activation by Act involves hydrolytic removal of the nicotinamide mononucleotide (NMN) moiety of the NAD cofactor, changing its ping-pong type of reaction mechanism into a ternary complex reaction mechanism. It requires the presence of magnesium ions and is also able to use ADP-ribose. This chain is Methanol dehydrogenase activator, found in Bacillus methanolicus.